The following is a 345-amino-acid chain: Aspartate--ammonia ligase (345 aa).

This sequence belongs to the class-II aminoacyl-tRNA synthetase family. AsnA subfamily.

It localises to the cytoplasm. It catalyses the reaction L-aspartate + NH4(+) + ATP = L-asparagine + AMP + diphosphate + H(+). The protein operates within amino-acid biosynthesis; L-asparagine biosynthesis; L-asparagine from L-aspartate (ammonia route): step 1/1. This chain is Aspartate--ammonia ligase, found in Bacteroides fragilis (strain ATCC 25285 / DSM 2151 / CCUG 4856 / JCM 11019 / LMG 10263 / NCTC 9343 / Onslow / VPI 2553 / EN-2).